Here is a 700-residue protein sequence, read N- to C-terminus: Transketolase (700 aa).

His45 serves as a coordination point for substrate. Residues Thr48, His85, and 133-135 each bind thiamine diphosphate; that span reads GPL. Residue Asp177 participates in Mg(2+) binding. 2 residues coordinate thiamine diphosphate: Gly178 and Asn207. Positions 207 and 209 each coordinate Mg(2+). His283, Arg378, and Ser405 together coordinate substrate. His283 contacts thiamine diphosphate. Residue Glu441 is the Proton donor of the active site. Phe467 contributes to the thiamine diphosphate binding site. Substrate contacts are provided by His491, Asp499, and Arg552.

The protein belongs to the transketolase family. As to quaternary structure, homodimer. It depends on Mg(2+) as a cofactor. Ca(2+) serves as cofactor. Mn(2+) is required as a cofactor. The cofactor is Co(2+). Requires thiamine diphosphate as cofactor.

The enzyme catalyses D-sedoheptulose 7-phosphate + D-glyceraldehyde 3-phosphate = aldehydo-D-ribose 5-phosphate + D-xylulose 5-phosphate. In terms of biological role, catalyzes the transfer of a two-carbon ketol group from a ketose donor to an aldose acceptor, via a covalent intermediate with the cofactor thiamine pyrophosphate. This is Transketolase (tkt) from Mycobacterium bovis (strain ATCC BAA-935 / AF2122/97).